Consider the following 268-residue polypeptide: Small ribosomal subunit protein uS2 (268 aa).

A disordered region spans residues 228–268 (QLDSEQDYEDFDESISDEYDDYEDEEEYEEQDLEVDASEDE). Residues 231–268 (SEQDYEDFDESISDEYDDYEDEEEYEEQDLEVDASEDE) are compositionally biased toward acidic residues.

It belongs to the universal ribosomal protein uS2 family.

This chain is Small ribosomal subunit protein uS2, found in Rippkaea orientalis (strain PCC 8801 / RF-1) (Cyanothece sp. (strain PCC 8801)).